Reading from the N-terminus, the 379-residue chain is PqqA peptide cyclase (379 aa).

A Radical SAM core domain is found at 8–220 (LPAPIGLLAE…IRVVEEARER (213 aa)). [4Fe-4S] cluster-binding residues include C22, C26, and C29.

The protein belongs to the radical SAM superfamily. PqqE family. Interacts with PqqD. The interaction is necessary for activity of PqqE. The cofactor is [4Fe-4S] cluster.

The catalysed reaction is [PQQ precursor protein] + S-adenosyl-L-methionine = E-Y cross-linked-[PQQ precursor protein] + 5'-deoxyadenosine + L-methionine + H(+). It participates in cofactor biosynthesis; pyrroloquinoline quinone biosynthesis. In terms of biological role, catalyzes the cross-linking of a glutamate residue and a tyrosine residue in the PqqA protein as part of the biosynthesis of pyrroloquinoline quinone (PQQ). The polypeptide is PqqA peptide cyclase (Methylobacterium sp. (strain 4-46)).